The following is a 346-amino-acid chain: Methylthioribose-1-phosphate isomerase (346 aa).

Residues 47 to 49 (RGA), arginine 88, and glutamine 195 contribute to the substrate site. Catalysis depends on aspartate 236, which acts as the Proton donor. Residue 246–247 (NK) participates in substrate binding.

The protein belongs to the eIF-2B alpha/beta/delta subunits family. MtnA subfamily.

The enzyme catalyses 5-(methylsulfanyl)-alpha-D-ribose 1-phosphate = 5-(methylsulfanyl)-D-ribulose 1-phosphate. It functions in the pathway amino-acid biosynthesis; L-methionine biosynthesis via salvage pathway; L-methionine from S-methyl-5-thio-alpha-D-ribose 1-phosphate: step 1/6. Catalyzes the interconversion of methylthioribose-1-phosphate (MTR-1-P) into methylthioribulose-1-phosphate (MTRu-1-P). The chain is Methylthioribose-1-phosphate isomerase from Maridesulfovibrio salexigens (strain ATCC 14822 / DSM 2638 / NCIMB 8403 / VKM B-1763) (Desulfovibrio salexigens).